A 264-amino-acid polypeptide reads, in one-letter code: Thymidylate synthase (264 aa).

R21 contributes to the dUMP binding site. Residue H51 coordinates (6R)-5,10-methylene-5,6,7,8-tetrahydrofolate. 126-127 (RR) contributes to the dUMP binding site. C146 functions as the Nucleophile in the catalytic mechanism. Residues 166-169 (RSCD), N177, and 207-209 (HLY) each bind dUMP. Position 169 (D169) interacts with (6R)-5,10-methylene-5,6,7,8-tetrahydrofolate. Residue S263 coordinates (6R)-5,10-methylene-5,6,7,8-tetrahydrofolate.

Belongs to the thymidylate synthase family. Bacterial-type ThyA subfamily. Homodimer.

Its subcellular location is the cytoplasm. The catalysed reaction is dUMP + (6R)-5,10-methylene-5,6,7,8-tetrahydrofolate = 7,8-dihydrofolate + dTMP. Its pathway is pyrimidine metabolism; dTTP biosynthesis. Its function is as follows. Catalyzes the reductive methylation of 2'-deoxyuridine-5'-monophosphate (dUMP) to 2'-deoxythymidine-5'-monophosphate (dTMP) while utilizing 5,10-methylenetetrahydrofolate (mTHF) as the methyl donor and reductant in the reaction, yielding dihydrofolate (DHF) as a by-product. This enzymatic reaction provides an intracellular de novo source of dTMP, an essential precursor for DNA biosynthesis. The polypeptide is Thymidylate synthase (Buchnera aphidicola subsp. Acyrthosiphon pisum (strain Tuc7)).